Here is a 443-residue protein sequence, read N- to C-terminus: Probable ribonuclease FAU-1 (443 aa).

It belongs to the FAU-1 family.

Functionally, probable RNase involved in rRNA stability through maturation and/or degradation of precursor rRNAs. Binds to RNA in loop regions with AU-rich sequences. The polypeptide is Probable ribonuclease FAU-1 (Pyrobaculum aerophilum (strain ATCC 51768 / DSM 7523 / JCM 9630 / CIP 104966 / NBRC 100827 / IM2)).